The sequence spans 402 residues: O-glucosyltransferase rumi homolog (402 aa).

An N-terminal signal peptide occupies residues 1–20 (MPYLEIVLALLVLSFQLGHS). Intrachain disulfides connect cysteine 67–cysteine 74, cysteine 72–cysteine 375, cysteine 118–cysteine 124, and cysteine 279–cysteine 302. Asparagine 71 carries N-linked (GlcNAc...) asparagine glycosylation. Aspartate 149 serves as the catalytic Proton donor/acceptor. Positions 189 to 194 (AISLYP) are interaction with the consensus sequence C-X-S-X-[PA]-C in peptide substrates. UDP-alpha-D-glucose contacts are provided by residues 226–230 (RGSRT), arginine 234, 273–275 (VRL), and 291–295 (AASFR).

It belongs to the glycosyltransferase 90 family.

Its subcellular location is the endoplasmic reticulum lumen. The protein localises to the secreted. Its pathway is protein modification; protein glycosylation. Its function is as follows. Protein O-glucosyltransferase. Catalyzes the reaction that attaches glucose through an O-glycosidic linkage to a conserved serine residue found in the consensus sequence C-X-S-X-[PA]-C in epidermal growth factor-like repeats. Regulates Notch signaling by glucosylating Notch in the ER, glucosylation is required for the correct folding and cleavage of Notch. In Aedes aegypti (Yellowfever mosquito), this protein is O-glucosyltransferase rumi homolog.